The chain runs to 135 residues: Mediator of RNA polymerase II transcription subunit 10 (135 aa).

Belongs to the Mediator complex subunit 10 family. In terms of assembly, component of the Mediator complex, which is composed of MED1, MED4, MED6, MED7, MED8, MED9, MED10, MED11, MED12, MED13, MED13L, MED14, MED15, MED16, MED17, MED18, MED19, MED20, MED21, MED22, MED23, MED24, MED25, MED26, MED27, MED29, MED30, MED31, CCNC, CDK8 and CDC2L6/CDK11. The MED12, MED13, CCNC and CDK8 subunits form a distinct module termed the CDK8 module. Mediator containing the CDK8 module is less active than Mediator lacking this module in supporting transcriptional activation. Individual preparations of the Mediator complex lacking one or more distinct subunits have been variously termed ARC, CRSP, DRIP, PC2, SMCC and TRAP.

The protein localises to the nucleus. In terms of biological role, component of the Mediator complex, a coactivator involved in the regulated transcription of nearly all RNA polymerase II-dependent genes. Mediator functions as a bridge to convey information from gene-specific regulatory proteins to the basal RNA polymerase II transcription machinery. Mediator is recruited to promoters by direct interactions with regulatory proteins and serves as a scaffold for the assembly of a functional preinitiation complex with RNA polymerase II and the general transcription factors. This is Mediator of RNA polymerase II transcription subunit 10 (MED10) from Macaca fascicularis (Crab-eating macaque).